Reading from the N-terminus, the 457-residue chain is Glutamate--tRNA ligase 2 (457 aa).

Residues 9–19 (PSPTGYIHIGN) carry the 'HIGH' region motif. The short motif at 250–254 (GLSKR) is the 'KMSKS' region element. Lysine 253 is a binding site for ATP.

The protein belongs to the class-I aminoacyl-tRNA synthetase family. Glutamate--tRNA ligase type 1 subfamily. As to quaternary structure, monomer.

The protein resides in the cytoplasm. It catalyses the reaction tRNA(Glu) + L-glutamate + ATP = L-glutamyl-tRNA(Glu) + AMP + diphosphate. Its function is as follows. Catalyzes the attachment of glutamate to tRNA(Glu) in a two-step reaction: glutamate is first activated by ATP to form Glu-AMP and then transferred to the acceptor end of tRNA(Glu). In Brucella melitensis biotype 1 (strain ATCC 23456 / CCUG 17765 / NCTC 10094 / 16M), this protein is Glutamate--tRNA ligase 2.